Consider the following 143-residue polypeptide: Large ribosomal subunit protein uL16 (143 aa).

A compositionally biased stretch (basic residues) spans 1–17; sequence MLQPKRTKFRKAHKGRI. Positions 1 to 20 are disordered; sequence MLQPKRTKFRKAHKGRIHGN.

Belongs to the universal ribosomal protein uL16 family. In terms of assembly, part of the 50S ribosomal subunit.

In terms of biological role, binds 23S rRNA and is also seen to make contacts with the A and possibly P site tRNAs. This chain is Large ribosomal subunit protein uL16, found in Zymomonas mobilis subsp. mobilis (strain ATCC 31821 / ZM4 / CP4).